The primary structure comprises 544 residues: Chaperonin GroEL (544 aa).

ATP is bound by residues 29-32, 86-90, Gly-413, 476-478, and Asp-492; these read TLGP, DGTTT, and NAA.

The protein belongs to the chaperonin (HSP60) family. In terms of assembly, forms a cylinder of 14 subunits composed of two heptameric rings stacked back-to-back. Interacts with the co-chaperonin GroES.

The protein resides in the cytoplasm. The catalysed reaction is ATP + H2O + a folded polypeptide = ADP + phosphate + an unfolded polypeptide.. Functionally, together with its co-chaperonin GroES, plays an essential role in assisting protein folding. The GroEL-GroES system forms a nano-cage that allows encapsulation of the non-native substrate proteins and provides a physical environment optimized to promote and accelerate protein folding. The sequence is that of Chaperonin GroEL from Bacillus velezensis (strain DSM 23117 / BGSC 10A6 / LMG 26770 / FZB42) (Bacillus amyloliquefaciens subsp. plantarum).